The sequence spans 123 residues: Holo-[acyl-carrier-protein] synthase (123 aa).

2 residues coordinate Mg(2+): D8 and E56.

It belongs to the P-Pant transferase superfamily. AcpS family. The cofactor is Mg(2+).

The protein resides in the cytoplasm. It carries out the reaction apo-[ACP] + CoA = holo-[ACP] + adenosine 3',5'-bisphosphate + H(+). In terms of biological role, transfers the 4'-phosphopantetheine moiety from coenzyme A to a Ser of acyl-carrier-protein. The polypeptide is Holo-[acyl-carrier-protein] synthase (Treponema denticola (strain ATCC 35405 / DSM 14222 / CIP 103919 / JCM 8153 / KCTC 15104)).